We begin with the raw amino-acid sequence, 145 residues long: ATP synthase epsilon chain (145 aa).

This sequence belongs to the ATPase epsilon chain family. As to quaternary structure, F-type ATPases have 2 components, CF(1) - the catalytic core - and CF(0) - the membrane proton channel. CF(1) has five subunits: alpha(3), beta(3), gamma(1), delta(1), epsilon(1). CF(0) has three main subunits: a, b and c.

It is found in the cell inner membrane. Its function is as follows. Produces ATP from ADP in the presence of a proton gradient across the membrane. The polypeptide is ATP synthase epsilon chain (Francisella tularensis subsp. mediasiatica (strain FSC147)).